A 75-amino-acid chain; its full sequence is uncharacterized protein (75 aa).

4Fe-4S ferredoxin-type domains follow at residues 2 to 30 (SHTIVTEKCIGVAECVNACPVSCIHKGEG) and 37 to 68 (DWYWIDFAACIDCSICIQVCPTKGAILDKEEP). 2 residues coordinate [3Fe-4S] cluster: Cys-10 and Cys-16. Cys-20, Cys-46, Cys-49, and Cys-52 together coordinate [4Fe-4S] cluster. Cys-56 serves as a coordination point for [3Fe-4S] cluster.

It depends on [4Fe-4S] cluster as a cofactor. The cofactor is [3Fe-4S] cluster.

The protein localises to the plastid. Its subcellular location is the chloroplast. This is an uncharacterized protein from Porphyra purpurea (Red seaweed).